Here is a 295-residue protein sequence, read N- to C-terminus: Trimeric intracellular cation channel type A (295 aa).

Over 1 to 18 the chain is Lumenal; it reads MELLSALSLDDLAASFSK. A helical transmembrane segment spans residues 19 to 39; that stretch reads LPVFPLFDVAYYIISILYLKY. Residues 40–51 lie on the Cytoplasmic side of the membrane; the sequence is EPGAVDLSKRSP. A helical transmembrane segment spans residues 52-72; it reads VASWLCAMLYCFGSYILADVL. The Lumenal portion of the chain corresponds to 73 to 84; sequence LGESPIHYFSNN. Position 74 (Gly74) interacts with Ca(2+). A helical transmembrane segment spans residues 85-105; the sequence is ANILLASAVWYLTFFCPLNIF. The Cytoplasmic portion of the chain corresponds to 106–144; sequence YKIVSFLPVKLVLVGMKEVVRVRKIAMGIHHAHHHYHHG. Lys122 and Arg126 together coordinate a 1,2-diacyl-sn-glycero-3-phospho-(1D-myo-inositol-4,5-bisphosphate). Residues 145–165 traverse the membrane as a helical segment; sequence WVIMVLIGWVKGSGVALMSNL. Over 166–178 the chain is Lumenal; it reads EQLLRGVWKPETN. The helical transmembrane segment at 179 to 199 threads the bilayer; sequence EILHMSFPTKASLYGAILFTL. Residues 200-201 are Cytoplasmic-facing; that stretch reads QQ. A helical membrane pass occupies residues 202 to 222; sequence AHWLPISKAYLIFFFTLFMAV. Residues 223-233 lie on the Lumenal side of the membrane; it reads CKIYMTATHSH. Residues 234-254 traverse the membrane as a helical segment; that stretch reads GSPFAIFESGICYVLFAAANG. Over 255 to 295 the chain is Cytoplasmic; that stretch reads DHDDHGNHHHHHDDHDVSHSAGKSKEEHNEGTRKRKTKKAE. A disordered region spans residues 258-295; the sequence is DHGNHHHHHDDHDVSHSAGKSKEEHNEGTRKRKTKKAE. Over residues 267 to 286 the composition is skewed to basic and acidic residues; that stretch reads DDHDVSHSAGKSKEEHNEGT.

This sequence belongs to the TMEM38 family. In terms of assembly, homotrimer; conformation seems to be controled by binding to diacylglycerol (DAG).

It is found in the sarcoplasmic reticulum membrane. It localises to the nucleus membrane. It catalyses the reaction K(+)(in) = K(+)(out). Its activity is regulated as follows. Channel activity is activated by a change of voltage within the sarcoplasmic reticulum lumen and blocked by luminal high Ca(2+) levels. Intracellular monovalent cation channel required for maintenance of rapid intracellular calcium release. Acts as a potassium counter-ion channel that functions in synchronization with calcium release from intracellular stores. Opened by a change of voltage within the sarcoplasmic reticulum lumen. The polypeptide is Trimeric intracellular cation channel type A (tmem38a) (Xenopus laevis (African clawed frog)).